Reading from the N-terminus, the 63-residue chain is Large ribosomal subunit protein bL35 (63 aa).

Belongs to the bacterial ribosomal protein bL35 family.

The sequence is that of Large ribosomal subunit protein bL35 from Finegoldia magna (strain ATCC 29328 / DSM 20472 / WAL 2508) (Peptostreptococcus magnus).